We begin with the raw amino-acid sequence, 66 residues long: Large ribosomal subunit protein bL35 (66 aa).

Belongs to the bacterial ribosomal protein bL35 family.

This is Large ribosomal subunit protein bL35 from Ruegeria pomeroyi (strain ATCC 700808 / DSM 15171 / DSS-3) (Silicibacter pomeroyi).